The chain runs to 111 residues: MAMPNFGDMMKQLQEAGAKMQDVQKQLEKLVSEGEAGGGMVKAKVNGRQKLLELSIDPEIMDDVDMVQDLVVAAVNKALDASAQLAQNEIQKAAGGMINPADLLKQFGGQG.

The protein belongs to the YbaB/EbfC family. Homodimer.

It localises to the cytoplasm. The protein resides in the nucleoid. In terms of biological role, binds to DNA and alters its conformation. May be involved in regulation of gene expression, nucleoid organization and DNA protection. In Chlorobaculum parvum (strain DSM 263 / NCIMB 8327) (Chlorobium vibrioforme subsp. thiosulfatophilum), this protein is Nucleoid-associated protein Cpar_0834.